The following is a 431-amino-acid chain: 3-phosphoshikimate 1-carboxyvinyltransferase (431 aa).

3 residues coordinate 3-phosphoshikimate: lysine 26, serine 27, and arginine 31. Lysine 26 serves as a coordination point for phosphoenolpyruvate. Residues glycine 100 and arginine 129 each contribute to the phosphoenolpyruvate site. 3-phosphoshikimate is bound by residues serine 175, serine 176, glutamine 177, aspartate 308, and glutamine 335. Glutamine 177 lines the phosphoenolpyruvate pocket. Aspartate 308 serves as the catalytic Proton acceptor. Arginine 339, arginine 381, and lysine 412 together coordinate phosphoenolpyruvate.

The protein belongs to the EPSP synthase family. Monomer.

Its subcellular location is the cytoplasm. The enzyme catalyses 3-phosphoshikimate + phosphoenolpyruvate = 5-O-(1-carboxyvinyl)-3-phosphoshikimate + phosphate. Its pathway is metabolic intermediate biosynthesis; chorismate biosynthesis; chorismate from D-erythrose 4-phosphate and phosphoenolpyruvate: step 6/7. In terms of biological role, catalyzes the transfer of the enolpyruvyl moiety of phosphoenolpyruvate (PEP) to the 5-hydroxyl of shikimate-3-phosphate (S3P) to produce enolpyruvyl shikimate-3-phosphate and inorganic phosphate. This is 3-phosphoshikimate 1-carboxyvinyltransferase from Opitutus terrae (strain DSM 11246 / JCM 15787 / PB90-1).